The sequence spans 282 residues: HTH-type transcriptional activator RhaR (282 aa).

Residues 179–277 enclose the HTH araC/xylS-type domain; sequence DKLITALANS…GMTPSQWRHL (99 aa). 2 consecutive DNA-binding regions (H-T-H motif) follow at residues 196 to 217 and 244 to 267; these read DAFC…RAQT and ISEI…TRET.

Binds DNA as a dimer.

The protein localises to the cytoplasm. Activates expression of the rhaSR operon in response to L-rhamnose. The chain is HTH-type transcriptional activator RhaR from Salmonella schwarzengrund (strain CVM19633).